The chain runs to 129 residues: MDPESRRLFNVRKVLKGKKPQFKRTCSHKFKKLDDNWRRPRGSQGKQRRKYAAKGALAQVGYGSPAAVKGLHPSGYSDVLISSIAELELVDPSFEAIRIAGKIGAKKKALIIAKAEEAGIKVLNPGRSE.

This sequence belongs to the eukaryotic ribosomal protein eL32 family.

The protein is Large ribosomal subunit protein eL32 (rpl32e) of Methanosarcina mazei (strain ATCC BAA-159 / DSM 3647 / Goe1 / Go1 / JCM 11833 / OCM 88) (Methanosarcina frisia).